Consider the following 296-residue polypeptide: Ribonuclease H2 subunit A (296 aa).

One can recognise an RNase H type-2 domain in the interval 14 to 236 (PCLMGIDEAG…CTTHLKGEVE (223 aa)). 3 residues coordinate a divalent metal cation: Asp20, Glu21, and Asp127.

Belongs to the RNase HII family. Eukaryotic subfamily. The cofactor is Mn(2+). It depends on Mg(2+) as a cofactor.

It catalyses the reaction Endonucleolytic cleavage to 5'-phosphomonoester.. In terms of biological role, catalytic subunit of RNase HII, an endonuclease that specifically degrades the RNA of RNA:DNA hybrids. Participates in DNA replication, possibly by mediating the removal of lagging-strand Okazaki fragment RNA primers during DNA replication. Mediates the excision of single ribonucleotides from DNA:RNA duplexes. The chain is Ribonuclease H2 subunit A from Arabidopsis thaliana (Mouse-ear cress).